Here is a 274-residue protein sequence, read N- to C-terminus: Large ribosomal subunit protein uL2 (274 aa).

Residues 223–256 are disordered; it reads VVMNPVDHPHGGGEGKTGEGRHPVDPWGNLTKGY. A compositionally biased stretch (basic and acidic residues) spans 229–246; sequence DHPHGGGEGKTGEGRHPV.

Belongs to the universal ribosomal protein uL2 family. As to quaternary structure, part of the 50S ribosomal subunit. Forms a bridge to the 30S subunit in the 70S ribosome.

Its function is as follows. One of the primary rRNA binding proteins. Required for association of the 30S and 50S subunits to form the 70S ribosome, for tRNA binding and peptide bond formation. It has been suggested to have peptidyltransferase activity; this is somewhat controversial. Makes several contacts with the 16S rRNA in the 70S ribosome. This chain is Large ribosomal subunit protein uL2, found in Albidiferax ferrireducens (strain ATCC BAA-621 / DSM 15236 / T118) (Rhodoferax ferrireducens).